The following is a 77-amino-acid chain: Cell division topological specificity factor (77 aa).

This sequence belongs to the MinE family.

In terms of biological role, prevents the cell division inhibition by proteins MinC and MinD at internal division sites while permitting inhibition at polar sites. This ensures cell division at the proper site by restricting the formation of a division septum at the midpoint of the long axis of the cell. This Helicobacter pylori (strain P12) protein is Cell division topological specificity factor.